Consider the following 102-residue polypeptide: Flagellar hook-basal body complex protein FliE 1 (102 aa).

This sequence belongs to the FliE family.

The protein resides in the bacterial flagellum basal body. In Bradyrhizobium diazoefficiens (strain JCM 10833 / BCRC 13528 / IAM 13628 / NBRC 14792 / USDA 110), this protein is Flagellar hook-basal body complex protein FliE 1 (fliE1).